The sequence spans 172 residues: Large ribosomal subunit protein uL10 (172 aa).

This sequence belongs to the universal ribosomal protein uL10 family. In terms of assembly, part of the ribosomal stalk of the 50S ribosomal subunit. The N-terminus interacts with L11 and the large rRNA to form the base of the stalk. The C-terminus forms an elongated spine to which L12 dimers bind in a sequential fashion forming a multimeric L10(L12)X complex.

Forms part of the ribosomal stalk, playing a central role in the interaction of the ribosome with GTP-bound translation factors. The polypeptide is Large ribosomal subunit protein uL10 (rplJ) (Liberibacter asiaticus (Citrus greening disease)).